A 236-amino-acid chain; its full sequence is Ribose-5-phosphate isomerase A (236 aa).

Residues Thr31–Thr34, Asp84–Asp87, and Lys97–Gly100 contribute to the substrate site. Glu106 acts as the Proton acceptor in catalysis. Lys124 provides a ligand contact to substrate.

This sequence belongs to the ribose 5-phosphate isomerase family. In terms of assembly, homodimer.

The catalysed reaction is aldehydo-D-ribose 5-phosphate = D-ribulose 5-phosphate. The protein operates within carbohydrate degradation; pentose phosphate pathway; D-ribose 5-phosphate from D-ribulose 5-phosphate (non-oxidative stage): step 1/1. Functionally, catalyzes the reversible conversion of ribose-5-phosphate to ribulose 5-phosphate. The chain is Ribose-5-phosphate isomerase A from Polynucleobacter necessarius subsp. necessarius (strain STIR1).